Consider the following 575-residue polypeptide: Arginine--tRNA ligase (575 aa).

The short motif at 131–141 (ANPNGPLHIGH) is the 'HIGH' region element.

It belongs to the class-I aminoacyl-tRNA synthetase family.

The protein localises to the cytoplasm. It catalyses the reaction tRNA(Arg) + L-arginine + ATP = L-arginyl-tRNA(Arg) + AMP + diphosphate. This Methanobrevibacter smithii (strain ATCC 35061 / DSM 861 / OCM 144 / PS) protein is Arginine--tRNA ligase.